The sequence spans 304 residues: Quinolinate synthase (304 aa).

Residues histidine 24 and serine 41 each coordinate iminosuccinate. [4Fe-4S] cluster is bound at residue cysteine 86. Iminosuccinate contacts are provided by residues 112 to 114 (YVN) and serine 129. Cysteine 171 lines the [4Fe-4S] cluster pocket. Iminosuccinate is bound by residues 197 to 199 (HPE) and threonine 214. A [4Fe-4S] cluster-binding site is contributed by cysteine 259.

It belongs to the quinolinate synthase family. Type 2 subfamily. [4Fe-4S] cluster is required as a cofactor.

Its subcellular location is the cytoplasm. It carries out the reaction iminosuccinate + dihydroxyacetone phosphate = quinolinate + phosphate + 2 H2O + H(+). It participates in cofactor biosynthesis; NAD(+) biosynthesis; quinolinate from iminoaspartate: step 1/1. Functionally, catalyzes the condensation of iminoaspartate with dihydroxyacetone phosphate to form quinolinate. This chain is Quinolinate synthase, found in Geobacter sp. (strain M21).